A 970-amino-acid polypeptide reads, in one-letter code: MEEIMIQSIDESIHCGLIKNALFLSERLYASTANEDNLFKIAQIYYQMGKINQCLLILQQHPQITMIKNLYLLALSNYDLGNIQEAESSIIKCCIYFEKYFQPNNNNNNNNNNNNNNNNNNNNNNNNNKDKCNNSNKNNDSNNNSNSNNNENEYYGIYSDILCEFDDIVDINSISYGFDSPCSIGSVYYLMGLISKRKNQKEKAIKYLKKSVYTYPFLWVAFEQLCNICPDEIDISDLFSHTNLIHQINHLNQQQHQQHQQFQQYLSNSLNQNKVNNNNNNNNNNNNNINNNNSSNKNNEQTITSTVATGTTNITTNTIKPNNFIKPPYHPNHRVGLTPSSFYDSSIHITPINFKASIQQTNQQQQQQQQQQPQQPSQQNLQKYNNRYFVTPQTPLSHITPILSNRFSQNVVDPIPMVMDTPDSKGSQHPPSSNSQTPYTPSTPGVHHHQKQQPHQHKKSAPPSQMIKKSMSNEFDTPMSLDLKSPIFTTSTSSDVHGFTSSTSKQQQQQQQTKQQTTTTTTTTTSITDKEVLLTKTKKQVNFGKTEEFSLKSLSSSLSDDDYDEENHHYQQHHHLHHHNKSIDELELEEDDQLNITDNSVQPNFYEFDESSILDFNGGDLYEGLIELHKGQTQLLELFFILADSYRLLCLYLCKEAIESFKRLSEEQYRTGWVLTKVAKAYHELIDYKEARSIFQEVSQMEPYRLEGMELYSTLLWQMNEDAELSYIAHKYSEFDRLSPYSWVVVGNCFSLQRDHEAAIKLFRRAIQLDPDMTYAYTLCGHEYLANDELELALNAFRMAIRCDPRHYNAFYGIGLIYYRQEKYNLAEYHFRKALSINESSSVLCCYLGMTLQHNPNKIQDGIDMLYRSIEIQPKNTFAKFKLAAFLFANQQYHHAIDQLLEFKEIEPKETPIYILLGKCYKQLGELDKALDSLNTALDLDPKNSNYIRSLIDKLPLEDEDDNQDYFQLN.

TPR repeat units follow at residues 35–68 (EDNL…TMIK), 74–107 (ALSN…NNNN), 142–175 (NNNS…NSIS), and 185–218 (GSVY…YPFL). The tract at residues 106-149 (NNNNNNNNNNNNNNNNNNNNNNNKDKCNNSNKNNDSNNNSNSNN) is disordered. The segment at 274–300 (KVNNNNNNNNNNNNNINNNNSSNKNNE) is disordered. TPR repeat units lie at residues 319 to 353 (IKPN…TPIN) and 361 to 394 (TNQQ…TPQT). Disordered stretches follow at residues 358–379 (IQQT…PSQQ), 414–525 (PIPM…TTTT), and 556–582 (SSLS…HNKS). The segment covering 359-379 (QQTNQQQQQQQQQQPQQPSQQ) has biased composition (low complexity). A compositionally biased stretch (polar residues) spans 424 to 443 (SKGSQHPPSSNSQTPYTPST). Residues 446 to 460 (VHHHQKQQPHQHKKS) show a composition bias toward basic residues. The span at 500–525 (TSSTSKQQQQQQQTKQQTTTTTTTTT) shows a compositional bias: low complexity. 9 TPR repeats span residues 546–580 (TEEF…HHHN), 636–671 (LELF…QYRT), 672–705 (GWVL…EPYR), 740–773 (PYSW…DPDM), 775–807 (YAYT…DPRH), 808–841 (YNAF…NESS), 843–876 (VLCC…QPKN), 878–910 (FAKF…EPKE), and 911–944 (TPIY…DPKN). A compositionally biased stretch (basic residues) spans 570-580 (YQQHHHLHHHN).

It belongs to the APC3/CDC27 family. The APC/C is composed of at least 13 subunits that stay tightly associated throughout the cell cycle: anapc1, anapc2, anapc3, anapc4, anapc5, anapc6, anapc7, anapc8, anapc10, anapc11, cdc20, cdc26 and cdh1.

The protein localises to the nucleus. Its pathway is protein modification; protein ubiquitination. Its function is as follows. Component of the anaphase promoting complex/cyclosome (APC/C), a cell cycle-regulated E3 ubiquitin-protein ligase complex that controls progression through mitosis and the G1 phase of the cell cycle. The sequence is that of Anaphase-promoting complex subunit 3 (anapc3) from Dictyostelium discoideum (Social amoeba).